An 846-amino-acid chain; its full sequence is SLIT and NTRK-like protein 2 (846 aa).

Residues Met1–Ser21 form the signal peptide. Residues Arg22–Leu622 lie on the Extracellular side of the membrane. Disulfide bonds link Cys29-Cys35 and Cys33-Cys46. 6 LRR repeats span residues Arg63 to Asn84, Asn87 to Gly108, Thr111 to Gly132, Ser135 to Lys156, Lys159 to Phe180, and Leu182 to Glu203. Residue Asn84 is glycosylated (N-linked (GlcNAc...) asparagine). Positions Asp167–Glu215 are required for interaction with PTPRD. The 50-residue stretch at Asn216–Arg265 folds into the LRRCT 1 domain. A glycan (N-linked (GlcNAc...) asparagine) is linked at Asn219. Cystine bridges form between Cys220/Cys243 and Cys222/Cys263. Residues Asp261–Arg322 form a disordered region. Low complexity-rich tracts occupy residues Ser267–Ser276 and Arg285–Pro300. In terms of domain architecture, LRRNT spans Gln332 to Lys374. 6 LRR repeats span residues Ser377–Glu398, Ser401–Asn422, Ser425–Gly446, Ser449–Ala470, Asn473–Gly494, and Ala496–Asp517. N-linked (GlcNAc...) asparagine glycosylation occurs at Asn422. An LRRCT 2 domain is found at Asn530–Glu581. Residues Ile623–Phe643 traverse the membrane as a helical segment. Over Val644–Leu846 the chain is Cytoplasmic. Residue Tyr757 is modified to Phosphotyrosine.

It belongs to the SLITRK family. Interacts with PTPRD; this interaction is PTPRD splicing-dependent and may induce pre-synaptic differentiation. Interacts with NTRK2. In terms of tissue distribution, in the adult, significant expression is detected only in the brain. Broadly expressed in embryonic brain with highest expression in ventricular layer, subventricular zone, cortical plate, pyramidal layer of hippocampus, subicular neuroepithelium, thalamus, hypothalamus and spinal cord.

It is found in the membrane. It localises to the cell membrane. Its subcellular location is the cell projection. The protein resides in the dendrite. It is involved in synaptogenesis. Promotes excitatory synapse differentiation. Suppresses neurite outgrowth. Involved in the negative regulation of NTRK2. The sequence is that of SLIT and NTRK-like protein 2 (Slitrk2) from Mus musculus (Mouse).